The sequence spans 614 residues: MGKVIGIDLGTTNSCVAVMEGGEAVVITNAEGNRTTPSVVGFSKTGERLAGQVAKRQAVSNPDKTVISIKRHMGTDYKVKIDDKSYSPQEISAMILQKLKADAEAYLGQTVTEAVITVPAYFTDAQRQATKDAGTIAGLDVKRIINEPTAAALAYGLDKQEDQTVLVFDLGGGTFDVSLLELSQGMVEVKATSGNNKLGGDDFDQRLIDYMVAEFKKDQGVDLAKDRVALQRLKEAAEKAKVELSGVSTTNVNLPFITMTGEGPAHLDMNITRAKFEELTADLVEATLGPTRQALADAKLSWNEVNQVILVGGSTRIPAVQEAIKKLSGKEPHKGVNPDEVVALGAAIQGGVLAGEVKDIILVDVTPLSLGIETLGGVFTRIIDRNTTVPTTKSQVFSTAADSQTSVDIHVLQGEREMAAYNKTLGRFQLSGIPPAPRGIPQIEVKFDIDANGIVHVSAKDMATGNEQKVTITASTGLSQEEIEKMKKDAEAHADEDKKRKELIDAKNQADSMVYQTEKTLKDFEGKIPDNEAEPIKKALEELKTAAAGENIELIKEKTEGVTKVLYPIIEKMYQQTGGAAPGPDMGADPGAGGAQGDDNVVDAEYTEVDKDQK.

A Phosphothreonine; by autocatalysis modification is found at Thr174. A disordered region spans residues 576–614 (QTGGAAPGPDMGADPGAGGAQGDDNVVDAEYTEVDKDQK). The span at 578–589 (GGAAPGPDMGAD) shows a compositional bias: low complexity.

It belongs to the heat shock protein 70 family.

Functionally, acts as a chaperone. In Desulfitobacterium hafniense (strain DSM 10664 / DCB-2), this protein is Chaperone protein DnaK.